Consider the following 94-residue polypeptide: Histone-like DNA-binding protein (94 aa).

It belongs to the bacterial histone-like protein family.

The sequence is that of Histone-like DNA-binding protein from Rickettsia bellii (strain RML369-C).